We begin with the raw amino-acid sequence, 497 residues long: Probable cytosol aminopeptidase (497 aa).

Mn(2+) contacts are provided by Lys-265 and Asp-270. Lys-277 is a catalytic residue. Residues Asp-288, Asp-347, and Glu-349 each coordinate Mn(2+). Arg-351 is a catalytic residue.

This sequence belongs to the peptidase M17 family. The cofactor is Mn(2+).

Its subcellular location is the cytoplasm. The enzyme catalyses Release of an N-terminal amino acid, Xaa-|-Yaa-, in which Xaa is preferably Leu, but may be other amino acids including Pro although not Arg or Lys, and Yaa may be Pro. Amino acid amides and methyl esters are also readily hydrolyzed, but rates on arylamides are exceedingly low.. It carries out the reaction Release of an N-terminal amino acid, preferentially leucine, but not glutamic or aspartic acids.. Functionally, presumably involved in the processing and regular turnover of intracellular proteins. Catalyzes the removal of unsubstituted N-terminal amino acids from various peptides. The polypeptide is Probable cytosol aminopeptidase (Geobacillus thermodenitrificans (strain NG80-2)).